The sequence spans 316 residues: Pantothenate kinase (316 aa).

95–102 lines the ATP pocket; sequence GSVAVGKS.

It belongs to the prokaryotic pantothenate kinase family.

It is found in the cytoplasm. The enzyme catalyses (R)-pantothenate + ATP = (R)-4'-phosphopantothenate + ADP + H(+). It functions in the pathway cofactor biosynthesis; coenzyme A biosynthesis; CoA from (R)-pantothenate: step 1/5. The protein is Pantothenate kinase of Yersinia pseudotuberculosis serotype O:3 (strain YPIII).